Reading from the N-terminus, the 486-residue chain is Glutamyl-tRNA(Gln) amidotransferase subunit A (486 aa).

Catalysis depends on charge relay system residues Lys-75 and Ser-150. The Acyl-ester intermediate role is filled by Ser-174.

Belongs to the amidase family. GatA subfamily. Heterotrimer of A, B and C subunits.

The enzyme catalyses L-glutamyl-tRNA(Gln) + L-glutamine + ATP + H2O = L-glutaminyl-tRNA(Gln) + L-glutamate + ADP + phosphate + H(+). Allows the formation of correctly charged Gln-tRNA(Gln) through the transamidation of misacylated Glu-tRNA(Gln) in organisms which lack glutaminyl-tRNA synthetase. The reaction takes place in the presence of glutamine and ATP through an activated gamma-phospho-Glu-tRNA(Gln). The sequence is that of Glutamyl-tRNA(Gln) amidotransferase subunit A from Nostoc punctiforme (strain ATCC 29133 / PCC 73102).